The chain runs to 433 residues: D-amino acid dehydrogenase (433 aa).

3 to 17 (VLVLGSGVIGTTSAY) is a binding site for FAD.

It belongs to the DadA oxidoreductase family. It depends on FAD as a cofactor.

It carries out the reaction a D-alpha-amino acid + A + H2O = a 2-oxocarboxylate + AH2 + NH4(+). In terms of biological role, oxidative deamination of D-amino acids. The protein is D-amino acid dehydrogenase of Pseudomonas syringae pv. tomato (strain ATCC BAA-871 / DC3000).